A 361-amino-acid polypeptide reads, in one-letter code: tRNA/tmRNA (uracil-C(5))-methyltransferase (361 aa).

S-adenosyl-L-methionine is bound by residues glutamine 185, tyrosine 213, asparagine 218, glutamate 234, and aspartate 294. Cysteine 319 serves as the catalytic Nucleophile. Glutamate 353 functions as the Proton acceptor in the catalytic mechanism.

Belongs to the class I-like SAM-binding methyltransferase superfamily. RNA M5U methyltransferase family. TrmA subfamily.

The catalysed reaction is uridine(54) in tRNA + S-adenosyl-L-methionine = 5-methyluridine(54) in tRNA + S-adenosyl-L-homocysteine + H(+). The enzyme catalyses uridine(341) in tmRNA + S-adenosyl-L-methionine = 5-methyluridine(341) in tmRNA + S-adenosyl-L-homocysteine + H(+). Dual-specificity methyltransferase that catalyzes the formation of 5-methyluridine at position 54 (m5U54) in all tRNAs, and that of position 341 (m5U341) in tmRNA (transfer-mRNA). This is tRNA/tmRNA (uracil-C(5))-methyltransferase from Pseudomonas savastanoi pv. phaseolicola (strain 1448A / Race 6) (Pseudomonas syringae pv. phaseolicola (strain 1448A / Race 6)).